Reading from the N-terminus, the 197-residue chain is Small ribosomal subunit protein uS4 (197 aa).

The region spanning arginine 94–asparagine 158 is the S4 RNA-binding domain.

Belongs to the universal ribosomal protein uS4 family. In terms of assembly, part of the 30S ribosomal subunit. Contacts protein S5. The interaction surface between S4 and S5 is involved in control of translational fidelity.

In terms of biological role, one of the primary rRNA binding proteins, it binds directly to 16S rRNA where it nucleates assembly of the body of the 30S subunit. Its function is as follows. With S5 and S12 plays an important role in translational accuracy. In Carsonella ruddii (strain PV), this protein is Small ribosomal subunit protein uS4 (rpsD).